We begin with the raw amino-acid sequence, 358 residues long: MFTRLSAVEERFEEVTNLLCDPDVISDTKRLRELSKEQSSLEETVTTYREYKSVVSQIDDAKAMLEEKLDDEMREMVKLELNELSARKEQLEDRLKILLLPKDPNDEKNVIVEIRGAAGGDEAALFAAVLFRMYTRFAERNAFKIEVLEASPTDIGGYKEIVFSLSGRGAYSKMKFESGAHRVQRIPATESGGRIHTSTATVLVLPEAEDVEVEVHEKDIRIDTFCSSGAGGQSVNTTKSAVRVTHIPTGIMVSCQDEKSQHSNKDKALRVLRARLYDFYMQQQNAEADATRKSLVGTGDRSERIRTYNYPQSRVTDHRIGLTLHRLESVLEGEMDEVIDNLIMHEQTELLKSHAHSA.

Glutamine 233 bears the N5-methylglutamine mark.

It belongs to the prokaryotic/mitochondrial release factor family. Methylated by PrmC. Methylation increases the termination efficiency of RF1.

It is found in the cytoplasm. Peptide chain release factor 1 directs the termination of translation in response to the peptide chain termination codons UAG and UAA. In Brevibacillus brevis (strain 47 / JCM 6285 / NBRC 100599), this protein is Peptide chain release factor 1.